Reading from the N-terminus, the 522-residue chain is Transmembrane protein 213R (522 aa).

2 helical membrane-spanning segments follow: residues asparagine 33–glycine 50 and serine 55–glutamine 72.

This sequence belongs to the IIV-6 213R family.

The protein resides in the membrane. This chain is Transmembrane protein 213R, found in Invertebrate iridescent virus 6 (IIV-6).